The primary structure comprises 196 residues: Anthranilate synthase component 2 (196 aa).

The 194-residue stretch at 3–196 (VILIIDNYDS…RTVIRNFLRM (194 aa)) folds into the Glutamine amidotransferase type-1 domain. Position 60–62 (60–62 (GPG)) interacts with L-glutamine. Cys-89 serves as the catalytic Nucleophile; for GATase activity. Residues Gln-93 and 138–139 (SL) each bind L-glutamine. Catalysis depends on for GATase activity residues His-177 and Glu-179.

In terms of assembly, heterotetramer consisting of two non-identical subunits: a beta subunit (TrpG) and a large alpha subunit (TrpE).

The enzyme catalyses chorismate + L-glutamine = anthranilate + pyruvate + L-glutamate + H(+). The protein operates within amino-acid biosynthesis; L-tryptophan biosynthesis; L-tryptophan from chorismate: step 1/5. Part of a heterotetrameric complex that catalyzes the two-step biosynthesis of anthranilate, an intermediate in the biosynthesis of L-tryptophan. In the first step, the glutamine-binding beta subunit (TrpG) of anthranilate synthase (AS) provides the glutamine amidotransferase activity which generates ammonia as a substrate that, along with chorismate, is used in the second step, catalyzed by the large alpha subunit of AS (TrpE) to produce anthranilate. In the absence of TrpG, TrpE can synthesize anthranilate directly from chorismate and high concentrations of ammonia. The sequence is that of Anthranilate synthase component 2 (trpG) from Methanothermobacter thermautotrophicus (strain ATCC 29096 / DSM 1053 / JCM 10044 / NBRC 100330 / Delta H) (Methanobacterium thermoautotrophicum).